Consider the following 180-residue polypeptide: Cytochrome b6-f complex subunit 4 (180 aa).

The next 3 membrane-spanning stretches (helical) occupy residues 36–56, 95–115, and 131–151; these read LSYIFPVVILGTIACTIGLAV, LLGVLLMGSVPAGSLTVPFLE, and TVSLIGTAVALWLGIGAALPI.

Belongs to the cytochrome b family. PetD subfamily. As to quaternary structure, the 4 large subunits of the cytochrome b6-f complex are cytochrome b6, subunit IV (17 kDa polypeptide, petD), cytochrome f and the Rieske protein, while the 4 small subunits are petG, petL, petM and petN. The complex functions as a dimer.

It is found in the plastid. It localises to the chloroplast thylakoid membrane. Functionally, component of the cytochrome b6-f complex, which mediates electron transfer between photosystem II (PSII) and photosystem I (PSI), cyclic electron flow around PSI, and state transitions. The polypeptide is Cytochrome b6-f complex subunit 4 (Pinus thunbergii (Japanese black pine)).